Here is a 586-residue protein sequence, read N- to C-terminus: MEPAAALHFSRPASLLLLLSLCALVSAQVTVVGPTDPILAMVGENTTLRCCLSPEENAEDMEVRWFQSQFSPAVFVYKGGRERTEEQKEEYRGRTTFVSKDSRGSVALIIHNVTAEDNGIYQCYFQEGRSCNEAILHLVVAGLDSEPVIEMRDHEDGGIQLECISGGWYPKPLTVWRDPYGEVVPALKEVSTPDADSLFMVTTAVIIRDKSVRNVSCSINDTLLGQKKESVIFIPESFMPSRSPCVVILPVIMIILMIPIAICIYWINNLQKEKKDSHLMTFNLCLSLAGWRRTFLHAANVVLDQDTGHPYLFVSEDKRSVTLDPSRESIPGNPERFDSQLCVLGQESFASGKHYLEVDVENVIEWTVGICRDNVERKWEVPLLPQNGFWTLEMHKRKYWALTSLKWILSLEEPLCQVGIFLDYEAGDVSFYNMRDRSHIYTFPHSAFSVPVRPFFSLGSYDSQILICSAFTGASGVTVPEEGWTLHRAGTHHSPQNQFPSLTAMETSPGHLSSHCTMPLVEDTPSSPLVTQENIFQLPLSHPLQTSAPVHLLIRCGFSSSFGCNYGMESRHRELVVPQLPARKKV.

The N-terminal stretch at 1–27 is a signal peptide; that stretch reads MEPAAALHFSRPASLLLLLSLCALVSA. The Ig-like V-type domain occupies 28 to 139; the sequence is QVTVVGPTDP…SCNEAILHLV (112 aa). Over 28 to 246 the chain is Extracellular; sequence QVTVVGPTDP…SFMPSRSPCV (219 aa). 4 N-linked (GlcNAc...) asparagine glycosylation sites follow: asparagine 45, asparagine 112, asparagine 214, and asparagine 220. Cysteine 50 and cysteine 123 form a disulfide bridge. A helical transmembrane segment spans residues 247-267; it reads VILPVIMIILMIPIAICIYWI. Residues 268–586 lie on the Cytoplasmic side of the membrane; that stretch reads NNLQKEKKDS…VPQLPARKKV (319 aa). In terms of domain architecture, B30.2/SPRY spans 281 to 474; it reads TFNLCLSLAG…ILICSAFTGA (194 aa).

It belongs to the immunoglobulin superfamily. BTN/MOG family.

The protein localises to the membrane. This is Putative butyrophilin subfamily 2 member A3 (BTN2A3P) from Homo sapiens (Human).